The primary structure comprises 248 residues: Large ribosomal subunit protein uL4 (248 aa).

Residues 69 to 92 (HVPRLKNGSRAAKVPQAKGGREAH) are disordered.

Belongs to the universal ribosomal protein uL4 family. As to quaternary structure, part of the 50S ribosomal subunit.

Its function is as follows. One of the primary rRNA binding proteins, this protein initially binds near the 5'-end of the 23S rRNA. It is important during the early stages of 50S assembly. It makes multiple contacts with different domains of the 23S rRNA in the assembled 50S subunit and ribosome. Forms part of the polypeptide exit tunnel. This Methanoregula boonei (strain DSM 21154 / JCM 14090 / 6A8) protein is Large ribosomal subunit protein uL4.